A 145-amino-acid chain; its full sequence is Extracellular globin-2 (145 aa).

Residues 3 to 145 form the Globin domain; that stretch reads QCGVLEGLKV…HIEDGIKGHH (143 aa). Cysteines 4 and 133 form a disulfide. Residue His96 coordinates heme b.

This sequence belongs to the globin family. The extracellular hemoglobin of the earthworm consists of 12 subunits that have a hexagonal bilayer structure with a molecular weight near 3.8 million. Each one-twelfth subunit is composed primarily of disulfide linked trimers (chains A, B, and C) and monomers (chain D).

The protein is Extracellular globin-2 of Lumbricus terrestris (Common earthworm).